The following is a 203-amino-acid chain: Urease accessory protein UreG (203 aa).

Residue 10 to 17 participates in GTP binding; it reads GPVGAGKT.

This sequence belongs to the SIMIBI class G3E GTPase family. UreG subfamily. Homodimer. UreD, UreF and UreG form a complex that acts as a GTP-hydrolysis-dependent molecular chaperone, activating the urease apoprotein by helping to assemble the nickel containing metallocenter of UreC. The UreE protein probably delivers the nickel.

The protein localises to the cytoplasm. Facilitates the functional incorporation of the urease nickel metallocenter. This process requires GTP hydrolysis, probably effectuated by UreG. In Kocuria rhizophila (strain ATCC 9341 / DSM 348 / NBRC 103217 / DC2201), this protein is Urease accessory protein UreG.